We begin with the raw amino-acid sequence, 271 residues long: Protein CDV3 homolog (271 aa).

A compositionally biased stretch (basic and acidic residues) spans 37-47; sequence KREVVKPKKPE. Disordered regions lie at residues 37–151 and 186–271; these read KREV…GHGP and SQQA…DEAS. Low complexity predominate over residues 48–61; that stretch reads VAAGGVAVVGENEN. Positions 73–82 are enriched in acidic residues; it reads VEEEWKEFEE. Positions 95–114 are enriched in polar residues; it reads QLSTISSARSRTAQESSESQ. A Phosphoserine modification is found at Ser-134. A compositionally biased stretch (basic and acidic residues) spans 224–242; it reads RPEEQRKKKNEPAFEEVRH.

The protein belongs to the CDV3 family.

The sequence is that of Protein CDV3 homolog from Drosophila melanogaster (Fruit fly).